The sequence spans 380 residues: Phospho-N-acetylmuramoyl-pentapeptide-transferase (380 aa).

The next 11 helical transmembrane spans lie at 26–46, 75–95, 98–118, 135–155, 160–180, 183–203, 222–242, 259–279, 283–303, 311–331, and 357–377; these read IVAA…LFIE, MGGA…ADLG, LVWA…WDDW, LVLQ…DWQP, GFPF…PFVP, LFSP…VVAT, IVSS…IAGF, LGVF…YNTY, VFMG…LAVL, AILH…VWSF, and KIIV…LMSL.

This sequence belongs to the glycosyltransferase 4 family. MraY subfamily. It depends on Mg(2+) as a cofactor.

It localises to the cell inner membrane. It carries out the reaction UDP-N-acetyl-alpha-D-muramoyl-L-alanyl-gamma-D-glutamyl-meso-2,6-diaminopimeloyl-D-alanyl-D-alanine + di-trans,octa-cis-undecaprenyl phosphate = di-trans,octa-cis-undecaprenyl diphospho-N-acetyl-alpha-D-muramoyl-L-alanyl-D-glutamyl-meso-2,6-diaminopimeloyl-D-alanyl-D-alanine + UMP. It functions in the pathway cell wall biogenesis; peptidoglycan biosynthesis. Functionally, catalyzes the initial step of the lipid cycle reactions in the biosynthesis of the cell wall peptidoglycan: transfers peptidoglycan precursor phospho-MurNAc-pentapeptide from UDP-MurNAc-pentapeptide onto the lipid carrier undecaprenyl phosphate, yielding undecaprenyl-pyrophosphoryl-MurNAc-pentapeptide, known as lipid I. The sequence is that of Phospho-N-acetylmuramoyl-pentapeptide-transferase from Anaeromyxobacter sp. (strain Fw109-5).